An 814-amino-acid polypeptide reads, in one-letter code: Protein kintoun (814 aa).

Positions 234-246 (AANTARSPASPAP) are enriched in low complexity. Disordered stretches follow at residues 234–259 (AANT…EPRC) and 357–490 (ARQE…MGDP). The span at 388–404 (AAREESADGTGADHGEK) shows a compositional bias: basic and acidic residues. Serine 444 and serine 618 each carry phosphoserine. Residues 654 to 686 (AGLQGKGKGVREGCPLSEAEAADQSATSPAASD) are disordered. Positions 675 to 686 (ADQSATSPAASD) are enriched in low complexity.

This sequence belongs to the PIH1 family. Kintoun subfamily. As to quaternary structure, interacts with DNAI2 and HSPA1A. Interacts with CFAP300. Interacts with DNAAF4. Interacts with DNAAF6/PIH1D3. In terms of tissue distribution, expressed in nearly all organs of adult, with higher expression in tissues known to have motile cilia and flagella, such as brain and testis.

It localises to the cytoplasm. It is found in the dynein axonemal particle. Functionally, required for cytoplasmic pre-assembly of axonemal dyneins, thereby playing a central role in motility in cilia and flagella. Involved in pre-assembly of dynein arm complexes in the cytoplasm before intraflagellar transport loads them for the ciliary compartment. The chain is Protein kintoun from Mus musculus (Mouse).